The chain runs to 143 residues: Anti-sigma F factor (143 aa).

The protein belongs to the anti-sigma-factor family.

The catalysed reaction is L-seryl-[protein] + ATP = O-phospho-L-seryl-[protein] + ADP + H(+). It carries out the reaction L-threonyl-[protein] + ATP = O-phospho-L-threonyl-[protein] + ADP + H(+). In terms of biological role, binds to sigma F and blocks its ability to form an RNA polymerase holoenzyme (E-sigma F). Phosphorylates SpoIIAA on a serine residue. This phosphorylation may enable SpoIIAA to act as an anti-anti-sigma factor that counteracts SpoIIAB and thus releases sigma F from inhibition. The chain is Anti-sigma F factor from Clostridium botulinum (strain Alaska E43 / Type E3).